Consider the following 197-residue polypeptide: Ubiquitin-conjugating enzyme E2 T (197 aa).

In terms of domain architecture, UBC core spans 2-152; sequence QRASRLKREL…ARQWTEKHAR (151 aa). Cysteine 86 functions as the Glycyl thioester intermediate in the catalytic mechanism. Glycyl lysine isopeptide (Lys-Gly) (interchain with G-Cter in ubiquitin) cross-links involve residues lysine 91 and lysine 182. The interval 149–197 is disordered; the sequence is KHARQKQKADEEEMLDNLPEAGDSRVHNSTQKRKASQLVGIEKKFHPDV. Residue serine 184 is modified to Phosphoserine. Residues lysine 191 and lysine 192 each participate in a glycyl lysine isopeptide (Lys-Gly) (interchain with G-Cter in SUMO2) cross-link.

Belongs to the ubiquitin-conjugating enzyme family. In terms of assembly, directly interacts with FANCL. Interacts with BRCA1. Auto-ubiquitinated. Effects of auto-monoubiquitination at Lys-91 and Lys-182 are unclear: according to a report, monoubiquitination inactivates E2 enzyme activity. In contrast, according to another report, autoubiquitination does not affect E2 enzyme activity.

The protein resides in the nucleus. The enzyme catalyses S-ubiquitinyl-[E1 ubiquitin-activating enzyme]-L-cysteine + [E2 ubiquitin-conjugating enzyme]-L-cysteine = [E1 ubiquitin-activating enzyme]-L-cysteine + S-ubiquitinyl-[E2 ubiquitin-conjugating enzyme]-L-cysteine.. Its pathway is protein modification; protein ubiquitination. In terms of biological role, accepts ubiquitin from the E1 complex and catalyzes its covalent attachment to other proteins. Catalyzes monoubiquitination. Involved in mitomycin-C (MMC)-induced DNA repair. Acts as a specific E2 ubiquitin-conjugating enzyme for the Fanconi anemia complex by associating with E3 ubiquitin-protein ligase FANCL and catalyzing monoubiquitination of FANCD2, a key step in the DNA damage pathway. Also mediates monoubiquitination of FANCL and FANCI. May contribute to ubiquitination and degradation of BRCA1. In vitro able to promote polyubiquitination using all 7 ubiquitin Lys residues, but may prefer 'Lys-11'-, 'Lys-27'-, 'Lys-48'- and 'Lys-63'-linked polyubiquitination. The protein is Ubiquitin-conjugating enzyme E2 T (UBE2T) of Homo sapiens (Human).